The primary structure comprises 241 residues: Uridylate kinase (241 aa).

Position 12–15 (12–15 (KLSG)) interacts with ATP. The segment at 20–25 (GDKGVG) is involved in allosteric activation by GTP. G54 contacts UMP. Residues G55 and R59 each contribute to the ATP site. UMP contacts are provided by residues D74 and 135 to 142 (IGSPYFST). Positions 163, 169, and 172 each coordinate ATP.

The protein belongs to the UMP kinase family. As to quaternary structure, homohexamer.

It localises to the cytoplasm. It carries out the reaction UMP + ATP = UDP + ADP. It functions in the pathway pyrimidine metabolism; CTP biosynthesis via de novo pathway; UDP from UMP (UMPK route): step 1/1. Allosterically activated by GTP. Inhibited by UTP. In terms of biological role, catalyzes the reversible phosphorylation of UMP to UDP. This chain is Uridylate kinase, found in Streptococcus gordonii (strain Challis / ATCC 35105 / BCRC 15272 / CH1 / DL1 / V288).